A 381-amino-acid polypeptide reads, in one-letter code: Fe-S cluster assembly protein DRE2 (381 aa).

The segment at 8–165 (AQGSGRFLLL…KPDFGAQQAV (158 aa)) is N-terminal SAM-like domain. Positions 100-134 (RNRDNQIWGSGSDSAAGLGSSDGDGGGGEKMSSSE) are disordered. The span at 108–118 (GSGSDSAAGLG) shows a compositional bias: low complexity. Residues 119–128 (SSDGDGGGGE) are compositionally biased toward gly residues. The tract at residues 166 to 273 (PLKLGRKKNL…EEELLGEYDM (108 aa)) is linker. 4 residues coordinate [2Fe-2S] cluster: Cys283, Cys294, Cys297, and Cys299. Residues 283–299 (CRPKAGKRRRACKDCTC) are fe-S binding site A. 4 residues coordinate [4Fe-4S] cluster: Cys344, Cys347, Cys355, and Cys358. 2 consecutive short sequence motifs (cx2C motif) follow at residues 344–347 (CGNC) and 355–358 (CDGC). Positions 344–358 (CGNCALGDAFRCDGC) are fe-S binding site B.

It belongs to the anamorsin family. In terms of assembly, monomer. Interacts with TAH18. Interacts with MIA40. It depends on [2Fe-2S] cluster as a cofactor. [4Fe-4S] cluster serves as cofactor.

It localises to the cytoplasm. Its subcellular location is the mitochondrion intermembrane space. Component of the cytosolic iron-sulfur (Fe-S) protein assembly (CIA) machinery required for the maturation of extramitochondrial Fe-S proteins. Part of an electron transfer chain functioning in an early step of cytosolic Fe-S biogenesis, facilitating the de novo assembly of a [4Fe-4S] cluster on the scaffold complex CFD1-NBP35. Electrons are transferred to DRE2 from NADPH via the FAD- and FMN-containing protein TAH18. TAH18-DRE2 are also required for the assembly of the diferric tyrosyl radical cofactor of ribonucleotide reductase (RNR), probably by providing electrons for reduction during radical cofactor maturation in the catalytic small subunit RNR2. This Paracoccidioides brasiliensis (strain Pb18) protein is Fe-S cluster assembly protein DRE2.